The primary structure comprises 333 residues: Gap junction alpha-4 protein (333 aa).

Over 1 to 20 (MGDWGFLEKLLDQVQEHSTV) the chain is Cytoplasmic. Residues 21–40 (VGKIWLTVLFIFRILILGLA) traverse the membrane as a helical segment. The Extracellular portion of the chain corresponds to 41–76 (GESVWGDEQSDFECNTAQPGCTNVCYDQAFPISHIR). The chain crosses the membrane as a helical span at residues 77 to 99 (YWVLQFLFVSTPTLVYLGHVIYL). The Cytoplasmic portion of the chain corresponds to 100-148 (SRREERLRQKEGELRALPAKDPRVERALASIERQMAKISVAEDGHLRIR). The chain crosses the membrane as a helical span at residues 149-165 (GALMGTYVASVLCKSVL). At 166 to 207 (EAGFLYGQWRLYGWTMEPVFVCQRSPCPYLVDCFVSRPTEKT) the chain is on the extracellular side. A helical transmembrane segment spans residues 208 to 230 (IFIIFMLVVGLISLVLNLLELAY). The Cytoplasmic segment spans residues 231 to 333 (LLCRCLSRGV…SSSASKKQYV (103 aa)). The segment at 303–333 (SRAPLFLDPPPQTGRKSPSRPSSSASKKQYV) is disordered. The span at 317-333 (RKSPSRPSSSASKKQYV) shows a compositional bias: low complexity.

It belongs to the connexin family. Alpha-type (group II) subfamily. A connexon is composed of a hexamer of connexins.

It localises to the cell membrane. The protein resides in the cell junction. The protein localises to the gap junction. Functionally, one gap junction consists of a cluster of closely packed pairs of transmembrane channels, the connexons, through which materials of low MW diffuse from one cell to a neighboring cell. The chain is Gap junction alpha-4 protein (GJA4) from Bos taurus (Bovine).